Here is a 522-residue protein sequence, read N- to C-terminus: Maturase K (522 aa).

It belongs to the intron maturase 2 family. MatK subfamily.

Its subcellular location is the plastid. It is found in the chloroplast. Functionally, usually encoded in the trnK tRNA gene intron. Probably assists in splicing its own and other chloroplast group II introns. The polypeptide is Maturase K (Pillansia templemannii).